The primary structure comprises 104 residues: Gastrin (104 aa).

The first 21 residues, 1–21, serve as a signal peptide directing secretion; that stretch reads MQRLCAHALILVLALAAFCEA. Positions 22 to 58 are excised as a propeptide; that stretch reads SWKPHSQLQDAPVAPGANKGQEPLRMDRLGPASHPRR. The interval 26 to 70 is disordered; sequence HSQLQDAPVAPGANKGQEPLRMDRLGPASHPRRQLGLQDPPHMVA. Tyrosine 87 is modified (sulfotyrosine). Phenylalanine 92 carries the phenylalanine amide modification. Serine 96 is subject to Phosphoserine. Positions 96–104 are excised as a propeptide; it reads SAEEGDQHP.

Belongs to the gastrin/cholecystokinin family. Sulfation enhances proteolytic processing, and blocks peptide degradation. Levels of sulfation differ between proteolytically-cleaved gastrins and between tissues.

It localises to the secreted. Its function is as follows. Gastrin stimulates the stomach mucosa to produce and secrete hydrochloric acid and the pancreas to secrete its digestive enzymes. It also stimulates smooth muscle contraction and increases blood circulation and water secretion in the stomach and intestine. The sequence is that of Gastrin (GAST) from Ovis aries (Sheep).